Consider the following 175-residue polypeptide: Probable DNA-directed RNA polymerase subunit delta (175 aa).

One can recognise an HTH HARE-type domain in the interval 14–81; it reads CSMIEVVHSV…GENRWGLRSW (68 aa). The disordered stretch occupies residues 91–175; it reads ILPQPKPKKK…DETEEEEEEL (85 aa). A compositionally biased stretch (acidic residues) spans 106-175; it reads DGFDDYIEED…DETEEEEEEL (70 aa).

Belongs to the RpoE family. In terms of assembly, RNAP is composed of a core of 2 alpha, a beta and a beta' subunits. The core is associated with a delta subunit and one of several sigma factors.

Its function is as follows. Participates in both the initiation and recycling phases of transcription. In the presence of the delta subunit, RNAP displays an increased specificity of transcription, a decreased affinity for nucleic acids, and an increased efficiency of RNA synthesis because of enhanced recycling. In Bacillus anthracis, this protein is Probable DNA-directed RNA polymerase subunit delta.